We begin with the raw amino-acid sequence, 357 residues long: Peptide chain release factor 1 (357 aa).

N5-methylglutamine is present on Gln-234. The span at 284-307 shows a compositional bias: basic and acidic residues; that stretch reads KKQEQRSNDRKQQVGSGDRSERIR. The tract at residues 284-313 is disordered; the sequence is KKQEQRSNDRKQQVGSGDRSERIRTYNFPQ.

The protein belongs to the prokaryotic/mitochondrial release factor family. In terms of processing, methylated by PrmC. Methylation increases the termination efficiency of RF1.

It is found in the cytoplasm. In terms of biological role, peptide chain release factor 1 directs the termination of translation in response to the peptide chain termination codons UAG and UAA. The polypeptide is Peptide chain release factor 1 (Borrelia hermsii (strain HS1 / DAH)).